The chain runs to 393 residues: S-adenosylmethionine synthase 1 (393 aa).

Glu-9 is a binding site for Mg(2+). His-15 serves as a coordination point for ATP. Glu-43 is a binding site for K(+). Glu-56 and Gln-99 together coordinate L-methionine. ATP-binding positions include 167–169 (DGK), 235–238 (SGRF), Asp-246, 252–253 (RK), Ala-269, Lys-273, and Lys-277. Asp-246 serves as a coordination point for L-methionine. Lys-277 lines the L-methionine pocket.

Belongs to the AdoMet synthase family. As to quaternary structure, homotetramer. Mn(2+) is required as a cofactor. Mg(2+) serves as cofactor. Requires Co(2+) as cofactor. The cofactor is K(+).

It localises to the cytoplasm. It carries out the reaction L-methionine + ATP + H2O = S-adenosyl-L-methionine + phosphate + diphosphate. It participates in amino-acid biosynthesis; S-adenosyl-L-methionine biosynthesis; S-adenosyl-L-methionine from L-methionine: step 1/1. Its function is as follows. Catalyzes the formation of S-adenosylmethionine from methionine and ATP. The reaction comprises two steps that are both catalyzed by the same enzyme: formation of S-adenosylmethionine (AdoMet) and triphosphate, and subsequent hydrolysis of the triphosphate. The polypeptide is S-adenosylmethionine synthase 1 (SAMS1) (Brassica juncea (Indian mustard)).